A 218-amino-acid chain; its full sequence is Hypoxanthine-guanine phosphoribosyltransferase (218 aa).

An N-acetylalanine modification is found at alanine 2. A GMP-binding site is contributed by lysine 69. An N6-acetyllysine modification is found at lysine 103. Lysine 115 participates in a covalent cross-link: Glycyl lysine isopeptide (Lys-Gly) (interchain with G-Cter in SUMO1); alternate. A Glycyl lysine isopeptide (Lys-Gly) (interchain with G-Cter in SUMO2); alternate cross-link involves residue lysine 115. GMP contacts are provided by residues glutamate 134–threonine 142, lysine 166, lysine 186–valine 188, and aspartate 194. The active-site Proton acceptor is the aspartate 138. Threonine 142 is subject to Phosphothreonine. Aspartate 194 is a Mg(2+) binding site.

This sequence belongs to the purine/pyrimidine phosphoribosyltransferase family. In terms of assembly, homotetramer. Mg(2+) serves as cofactor.

It is found in the cytoplasm. The enzyme catalyses IMP + diphosphate = hypoxanthine + 5-phospho-alpha-D-ribose 1-diphosphate. The catalysed reaction is GMP + diphosphate = guanine + 5-phospho-alpha-D-ribose 1-diphosphate. The protein operates within purine metabolism; IMP biosynthesis via salvage pathway; IMP from hypoxanthine: step 1/1. Converts guanine to guanosine monophosphate, and hypoxanthine to inosine monophosphate. Transfers the 5-phosphoribosyl group from 5-phosphoribosylpyrophosphate onto the purine. Plays a central role in the generation of purine nucleotides through the purine salvage pathway. The chain is Hypoxanthine-guanine phosphoribosyltransferase (HPRT1) from Bos taurus (Bovine).